A 179-amino-acid chain; its full sequence is ATP-dependent protease subunit HslV (179 aa).

Thr-6 is a catalytic residue. Residues Ser-164, Cys-167, and Thr-170 each coordinate Na(+).

This sequence belongs to the peptidase T1B family. HslV subfamily. A double ring-shaped homohexamer of HslV is capped on each side by a ring-shaped HslU homohexamer. The assembly of the HslU/HslV complex is dependent on binding of ATP.

It is found in the cytoplasm. The enzyme catalyses ATP-dependent cleavage of peptide bonds with broad specificity.. Its activity is regulated as follows. Allosterically activated by HslU binding. Protease subunit of a proteasome-like degradation complex believed to be a general protein degrading machinery. The polypeptide is ATP-dependent protease subunit HslV (Listeria innocua serovar 6a (strain ATCC BAA-680 / CLIP 11262)).